A 357-amino-acid polypeptide reads, in one-letter code: UDP-N-acetylglucosamine--N-acetylmuramyl-(pentapeptide) pyrophosphoryl-undecaprenol N-acetylglucosamine transferase (357 aa).

UDP-N-acetyl-alpha-D-glucosamine contacts are provided by residues 14–16 (TGG), Asn-128, Arg-169, Ser-193, Ile-248, and Gln-292.

Belongs to the glycosyltransferase 28 family. MurG subfamily.

The protein localises to the cell inner membrane. The catalysed reaction is di-trans,octa-cis-undecaprenyl diphospho-N-acetyl-alpha-D-muramoyl-L-alanyl-D-glutamyl-meso-2,6-diaminopimeloyl-D-alanyl-D-alanine + UDP-N-acetyl-alpha-D-glucosamine = di-trans,octa-cis-undecaprenyl diphospho-[N-acetyl-alpha-D-glucosaminyl-(1-&gt;4)]-N-acetyl-alpha-D-muramoyl-L-alanyl-D-glutamyl-meso-2,6-diaminopimeloyl-D-alanyl-D-alanine + UDP + H(+). It functions in the pathway cell wall biogenesis; peptidoglycan biosynthesis. Functionally, cell wall formation. Catalyzes the transfer of a GlcNAc subunit on undecaprenyl-pyrophosphoryl-MurNAc-pentapeptide (lipid intermediate I) to form undecaprenyl-pyrophosphoryl-MurNAc-(pentapeptide)GlcNAc (lipid intermediate II). The polypeptide is UDP-N-acetylglucosamine--N-acetylmuramyl-(pentapeptide) pyrophosphoryl-undecaprenol N-acetylglucosamine transferase (Bdellovibrio bacteriovorus (strain ATCC 15356 / DSM 50701 / NCIMB 9529 / HD100)).